The following is a 174-amino-acid chain: Co-chaperone protein HscB homolog (174 aa).

In terms of domain architecture, J spans 2–74 (NYFELFNLPV…IRRAEHMLAL (73 aa)).

This sequence belongs to the HscB family. As to quaternary structure, interacts with HscA and stimulates its ATPase activity.

Functionally, co-chaperone involved in the maturation of iron-sulfur cluster-containing proteins. Seems to help targeting proteins to be folded toward HscA. The protein is Co-chaperone protein HscB homolog of Shewanella amazonensis (strain ATCC BAA-1098 / SB2B).